The following is a 140-amino-acid chain: Ribosome maturation factor RimP (140 aa).

This sequence belongs to the RimP family.

It is found in the cytoplasm. Required for maturation of 30S ribosomal subunits. The protein is Ribosome maturation factor RimP of Campylobacter jejuni subsp. jejuni serotype O:6 (strain 81116 / NCTC 11828).